The following is a 68-amino-acid chain: Large ribosomal subunit protein uL29 (68 aa).

The protein belongs to the universal ribosomal protein uL29 family.

This is Large ribosomal subunit protein uL29 from Streptococcus thermophilus (strain ATCC BAA-250 / LMG 18311).